The sequence spans 199 residues: Fe/S biogenesis protein NfuA (199 aa).

[4Fe-4S] cluster is bound by residues C151 and C154.

This sequence belongs to the NfuA family. In terms of assembly, homodimer. It depends on [4Fe-4S] cluster as a cofactor.

Functionally, involved in iron-sulfur cluster biogenesis. Binds a 4Fe-4S cluster, can transfer this cluster to apoproteins, and thereby intervenes in the maturation of Fe/S proteins. Could also act as a scaffold/chaperone for damaged Fe/S proteins. The protein is Fe/S biogenesis protein NfuA of Xanthomonas euvesicatoria pv. vesicatoria (strain 85-10) (Xanthomonas campestris pv. vesicatoria).